Here is an 85-residue protein sequence, read N- to C-terminus: Sec-independent protein translocase protein TatA (85 aa).

Residues 7–27 form a helical membrane-spanning segment; sequence VFGSLGWTEILLILFIALLLF. The interval 50–85 is disordered; sequence LTGESDDSSQQISQEQERSVPKEETKTSKSKKSKSA. Residues 64–76 show a composition bias toward basic and acidic residues; it reads EQERSVPKEETKT.

It belongs to the TatA/E family. In terms of assembly, forms a complex with TatC.

The protein localises to the cell inner membrane. Its function is as follows. Part of the twin-arginine translocation (Tat) system that transports large folded proteins containing a characteristic twin-arginine motif in their signal peptide across membranes. TatA could form the protein-conducting channel of the Tat system. The chain is Sec-independent protein translocase protein TatA from Leptospira interrogans serogroup Icterohaemorrhagiae serovar Lai (strain 56601).